The sequence spans 197 residues: Peptide deformylase (197 aa).

2 residues coordinate Fe cation: Cys-106 and His-148. Glu-149 is an active-site residue. His-152 is a Fe cation binding site.

It belongs to the polypeptide deformylase family. Requires Fe(2+) as cofactor.

It catalyses the reaction N-terminal N-formyl-L-methionyl-[peptide] + H2O = N-terminal L-methionyl-[peptide] + formate. Removes the formyl group from the N-terminal Met of newly synthesized proteins. Requires at least a dipeptide for an efficient rate of reaction. N-terminal L-methionine is a prerequisite for activity but the enzyme has broad specificity at other positions. This chain is Peptide deformylase, found in Mycolicibacterium paratuberculosis (strain ATCC BAA-968 / K-10) (Mycobacterium paratuberculosis).